The chain runs to 275 residues: S-formylglutathione hydrolase (275 aa).

Residues serine 145, aspartate 221, and histidine 254 each act as charge relay system in the active site.

It belongs to the esterase D family.

The enzyme catalyses S-formylglutathione + H2O = formate + glutathione + H(+). Functionally, serine hydrolase involved in the detoxification of formaldehyde. Hydrolyzes S-formylglutathione to glutathione and formate. The protein is S-formylglutathione hydrolase of Haemophilus influenzae (strain ATCC 51907 / DSM 11121 / KW20 / Rd).